The primary structure comprises 273 residues: MKILRWLFALVMLIATTEAMAAGHSVDVYYGYNGDSRNIATFNLKIMMPSAVYVGEYKSSQWLMTGEILQNVSWSGPPPAPSVKLIGYHQNINKASCPGLPSGWNCGYYTFEVIVSAEIESYFSCPWLVIMNDSEASPGGVTYQGPDSHDTICPSVSVQPYDVSWNENYVSKSKLLTLQSTGGVVEKTLSTYLMKDGKLCDSTQMNETGGYCRWVAQMITFTASGCDKAEVSVTPNRHPITDKQLHDMVVRVDTSSMQPIDSTCRFQYILNEL.

The N-terminal stretch at 1 to 21 (MKILRWLFALVMLIATTEAMA) is a signal peptide.

It to S.typhimurium YadU.

Its function is as follows. Part of the yfcOPQRSUV fimbrial operon. Could contribute to adhesion to various surfaces in specific environmental niches. Increases adhesion to eukaryotic T24 bladder epithelial cells in the absence of fim genes. This is an uncharacterized protein from Escherichia coli (strain K12).